The following is a 1067-amino-acid chain: Probable isoleucine--tRNA ligase, cytoplasmic (1067 aa).

The short motif at 47 to 57 is the 'HIGH' region element; that stretch reads PFATGLPHYGH. The 'KMSKS' region motif lies at 604–608; it reads KMSKR. Lysine 607 lines the ATP pocket.

This sequence belongs to the class-I aminoacyl-tRNA synthetase family.

It localises to the cytoplasm. It catalyses the reaction tRNA(Ile) + L-isoleucine + ATP = L-isoleucyl-tRNA(Ile) + AMP + diphosphate. This Dictyostelium discoideum (Social amoeba) protein is Probable isoleucine--tRNA ligase, cytoplasmic (ileS).